A 257-amino-acid polypeptide reads, in one-letter code: NAD-capped RNA hydrolase NudC (257 aa).

Substrate is bound at residue Arg69. Zn(2+)-binding residues include Cys98 and Cys101. Position 111 (Glu111) interacts with substrate. Cys116 and Cys119 together coordinate Zn(2+). A substrate-binding site is contributed by Tyr124. Residues 125 to 248 (PQIAPCIIVA…TVARRLIEDT (124 aa)) form the Nudix hydrolase domain. 3 residues coordinate a divalent metal cation: Ala158, Glu174, and Glu178. The short motif at 159 to 180 (GFVEVGETLEQAVAREVMEESG) is the Nudix box element. Position 192–199 (192–199 (QPWPFPQS)) interacts with substrate. Glu219 lines the a divalent metal cation pocket. Residue Ala241 coordinates substrate.

It belongs to the Nudix hydrolase family. NudC subfamily. As to quaternary structure, homodimer. Requires Mg(2+) as cofactor. The cofactor is Mn(2+). Zn(2+) serves as cofactor.

The enzyme catalyses a 5'-end NAD(+)-phospho-ribonucleoside in mRNA + H2O = a 5'-end phospho-adenosine-phospho-ribonucleoside in mRNA + beta-nicotinamide D-ribonucleotide + 2 H(+). The catalysed reaction is NAD(+) + H2O = beta-nicotinamide D-ribonucleotide + AMP + 2 H(+). It catalyses the reaction NADH + H2O = reduced beta-nicotinamide D-ribonucleotide + AMP + 2 H(+). Its function is as follows. mRNA decapping enzyme that specifically removes the nicotinamide adenine dinucleotide (NAD) cap from a subset of mRNAs by hydrolyzing the diphosphate linkage to produce nicotinamide mononucleotide (NMN) and 5' monophosphate mRNA. The NAD-cap is present at the 5'-end of some mRNAs and stabilizes RNA against 5'-processing. Has preference for mRNAs with a 5'-end purine. Catalyzes the hydrolysis of a broad range of dinucleotide pyrophosphates. This is NAD-capped RNA hydrolase NudC from Klebsiella pneumoniae (strain 342).